Consider the following 370-residue polypeptide: Binary larvicide subunit BinA (370 aa).

Positions 1-6 (MRNLDF) are excised as a propeptide. The beta-trefoil domain stretch occupies residues 1–155 (MRNLDFIDSF…LISNKEQIYL (155 aa)). An intrachain disulfide couples C31 to C47. The interval 156–370 (TLPSLPENEQ…NTKIITDDQN (215 aa)) is pore-forming domain.

It belongs to the toxin_10 family. As to quaternary structure, forms a heterodimer with BinB. Post-translationally, processed by proteases in the mosquito gut, probably at both the N- and C-termini.

It localises to the spore. The protein localises to the perispore. Component of a binary toxin active against Culex and some Aedes mosquito larvae. The individual subunits are not toxic. BinAB binds to the gastric caecum and posterior midgut of C.quinquefasciatus larvae; this subunit alone binds the entire larval gut. Binary toxin internalization into host gut cells requires both proteins. Toxic to Aedes atropalpus mosquito larvae; mortality towards both C.quinquefasciatus and A.atropalpus is maximal by 48 hours. A.aegypti is not very susceptible to this toxin. This chain is Binary larvicide subunit BinA (binA), found in Lysinibacillus sphaericus (Bacillus sphaericus).